Consider the following 518-residue polypeptide: Glutamate--cysteine ligase (518 aa).

This sequence belongs to the glutamate--cysteine ligase type 1 family. Type 1 subfamily.

It carries out the reaction L-cysteine + L-glutamate + ATP = gamma-L-glutamyl-L-cysteine + ADP + phosphate + H(+). It participates in sulfur metabolism; glutathione biosynthesis; glutathione from L-cysteine and L-glutamate: step 1/2. This is Glutamate--cysteine ligase from Escherichia coli O8 (strain IAI1).